A 511-amino-acid polypeptide reads, in one-letter code: ATP synthase subunit alpha 1 (511 aa).

Gly-170 to Thr-177 is an ATP binding site.

Belongs to the ATPase alpha/beta chains family. In terms of assembly, F-type ATPases have 2 components, CF(1) - the catalytic core - and CF(0) - the membrane proton channel. CF(1) has five subunits: alpha(3), beta(3), gamma(1), delta(1), epsilon(1). CF(0) has three main subunits: a(1), b(2) and c(9-12). The alpha and beta chains form an alternating ring which encloses part of the gamma chain. CF(1) is attached to CF(0) by a central stalk formed by the gamma and epsilon chains, while a peripheral stalk is formed by the delta and b chains.

Its subcellular location is the cell inner membrane. The enzyme catalyses ATP + H2O + 4 H(+)(in) = ADP + phosphate + 5 H(+)(out). Its function is as follows. Produces ATP from ADP in the presence of a proton gradient across the membrane. The alpha chain is a regulatory subunit. This Gluconobacter oxydans (strain 621H) (Gluconobacter suboxydans) protein is ATP synthase subunit alpha 1.